The sequence spans 116 residues: uncharacterized protein (116 aa).

The N-acetylmuramoyl-L-alanine amidase domain occupies 2–73; that stretch reads DGSVGTGRQV…PKALICGHRD (72 aa).

This sequence to phage T3 and T7 N-acetylmuramoyl-L-alanine amidases.

This is an uncharacterized protein from Haemophilus influenzae (strain ATCC 51907 / DSM 11121 / KW20 / Rd).